Consider the following 695-residue polypeptide: FMR1-interacting protein NUFIP2 (695 aa).

The segment at 1-100 (MEEKPGQPQP…KTGYGELNGN (100 aa)) is disordered. Basic residues-rich tracts occupy residues 11–23 (QHHH…HHHP) and 30–53 (PHHH…HHQQ). A Glycyl lysine isopeptide (Lys-Gly) (interchain with G-Cter in SUMO2) cross-link involves residue lysine 78. Threonine 87 bears the Phosphothreonine mark. Lysine 109 is covalently cross-linked (Glycyl lysine isopeptide (Lys-Gly) (interchain with G-Cter in SUMO2)). Phosphoserine is present on residues serine 112 and serine 113. Glycyl lysine isopeptide (Lys-Gly) (interchain with G-Cter in SUMO2) cross-links involve residues lysine 136, lysine 146, lysine 157, and lysine 171. Disordered regions lie at residues 155-189 (IQKN…IPNG), 204-234 (GKGA…AKGC), 261-341 (FKPD…KPPP), and 369-402 (TIQN…SQVP). The segment covering 159–182 (SMDKKNGKSYENKSGENQSVDKSD) has biased composition (basic and acidic residues). Serine 212 and serine 214 each carry phosphoserine. Tyrosine 218 bears the Phosphotyrosine mark. Residues threonine 219 and threonine 220 each carry the phosphothreonine modification. The span at 221–230 (PKKRKARRNS) shows a compositional bias: basic residues. The segment covering 261-275 (FKPDYSEQKGNRVDG) has biased composition (basic and acidic residues). Glycyl lysine isopeptide (Lys-Gly) (interchain with G-Cter in SUMO2) cross-links involve residues lysine 262 and lysine 281. An Omega-N-methylarginine modification is found at arginine 291. Lysine 293 is covalently cross-linked (Glycyl lysine isopeptide (Lys-Gly) (interchain with G-Cter in SUMO2)). The residue at position 304 (serine 304) is a Phosphoserine. A Glycyl lysine isopeptide (Lys-Gly) (interchain with G-Cter in SUMO2) cross-link involves residue lysine 307. Residues 373 to 396 (SSVSPTSSSSSSSSTGETQTQSSS) are compositionally biased toward low complexity. Serine 376 carries the post-translational modification Phosphoserine. Position 571 is a phosphothreonine (threonine 571). Phosphoserine occurs at positions 572, 592, 608, and 629. Position 633 is a phosphothreonine (threonine 633). A phosphoserine mark is found at serine 637, serine 652, serine 655, and serine 692.

In terms of assembly, interacts with FMR1 (via N-terminus). Interacts with DDX6.

Its subcellular location is the nucleus. It localises to the cytoplasm. It is found in the stress granule. In terms of biological role, binds RNA. The chain is FMR1-interacting protein NUFIP2 from Homo sapiens (Human).